A 239-amino-acid polypeptide reads, in one-letter code: 7-cyano-7-deazaguanine synthase (239 aa).

ATP is bound at residue 13–23 (FSGGQDSTTCL). Residues C201, C216, C219, and C222 each coordinate Zn(2+).

It belongs to the QueC family. Zn(2+) is required as a cofactor.

It catalyses the reaction 7-carboxy-7-deazaguanine + NH4(+) + ATP = 7-cyano-7-deazaguanine + ADP + phosphate + H2O + H(+). Its pathway is purine metabolism; 7-cyano-7-deazaguanine biosynthesis. Catalyzes the ATP-dependent conversion of 7-carboxy-7-deazaguanine (CDG) to 7-cyano-7-deazaguanine (preQ(0)). This Bradyrhizobium sp. (strain BTAi1 / ATCC BAA-1182) protein is 7-cyano-7-deazaguanine synthase.